The following is a 36-amino-acid chain: Thrombin-like enzyme TLP (36 aa).

A Peptidase S1 domain is found at 1-36 (IGGFECNEHEHRSLVYLYNSAGFFCAGTLLNHEWVV).

Belongs to the peptidase S1 family. Snake venom subfamily. As to quaternary structure, monomer. Expressed by the venom gland.

The protein resides in the secreted. Its function is as follows. Thrombin-like snake venom serine protease. Shows strong hydrolytic activity towards Boc-Asp(oBzl)-Pro-Arg-MCA, a synthetic substrate for thrombin. The chain is Thrombin-like enzyme TLP from Naja naja (Indian cobra).